A 211-amino-acid chain; its full sequence is Thiamine-phosphate synthase (211 aa).

Residues 37–41 (QLRIK) and Asn69 each bind 4-amino-2-methyl-5-(diphosphooxymethyl)pyrimidine. Residues Asp70 and Asp89 each coordinate Mg(2+). Ser108 is a binding site for 4-amino-2-methyl-5-(diphosphooxymethyl)pyrimidine. Position 134 to 136 (134 to 136 (TQT)) interacts with 2-[(2R,5Z)-2-carboxy-4-methylthiazol-5(2H)-ylidene]ethyl phosphate. Residue Lys137 participates in 4-amino-2-methyl-5-(diphosphooxymethyl)pyrimidine binding. Residues Gly166 and 186-187 (VS) contribute to the 2-[(2R,5Z)-2-carboxy-4-methylthiazol-5(2H)-ylidene]ethyl phosphate site.

The protein belongs to the thiamine-phosphate synthase family. Mg(2+) serves as cofactor.

It catalyses the reaction 2-[(2R,5Z)-2-carboxy-4-methylthiazol-5(2H)-ylidene]ethyl phosphate + 4-amino-2-methyl-5-(diphosphooxymethyl)pyrimidine + 2 H(+) = thiamine phosphate + CO2 + diphosphate. The enzyme catalyses 2-(2-carboxy-4-methylthiazol-5-yl)ethyl phosphate + 4-amino-2-methyl-5-(diphosphooxymethyl)pyrimidine + 2 H(+) = thiamine phosphate + CO2 + diphosphate. It carries out the reaction 4-methyl-5-(2-phosphooxyethyl)-thiazole + 4-amino-2-methyl-5-(diphosphooxymethyl)pyrimidine + H(+) = thiamine phosphate + diphosphate. It functions in the pathway cofactor biosynthesis; thiamine diphosphate biosynthesis; thiamine phosphate from 4-amino-2-methyl-5-diphosphomethylpyrimidine and 4-methyl-5-(2-phosphoethyl)-thiazole: step 1/1. Condenses 4-methyl-5-(beta-hydroxyethyl)thiazole monophosphate (THZ-P) and 2-methyl-4-amino-5-hydroxymethyl pyrimidine pyrophosphate (HMP-PP) to form thiamine monophosphate (TMP). The sequence is that of Thiamine-phosphate synthase from Shigella sonnei (strain Ss046).